Reading from the N-terminus, the 37-residue chain is Potassium channel toxin alpha-KTx 15.3 (37 aa).

At Q1 the chain carries Pyrrolidone carboxylic acid. Intrachain disulfides connect C8/C28, C13/C33, and C17/C35.

In terms of tissue distribution, expressed by the venom gland.

It localises to the secreted. Its function is as follows. Inhibits A-type (Kv4) voltage-gated potassium channels of striated neurons (Ki=131 nM), probably by acting as a pore blocker. Has also been shown to block ERG1/Kv11.1/KCNH2 potassium channels (IC(50)=7.9 uM). The presence of the Kv4-associated proteins DPP6 or DPP10 is mandatory to have high-affinity blockade of Kv4.2/KCND2 and Kv4.3/KCND3 channels (80-90% inhibition at 500 nM of toxin). In contrast, the presence of the Kv4-associated protein KChIP1/KCNIP1 does not enhance the affinity blockade (only 40% inhibition at 500 nM). In adult rat brain, the toxin binds to sites in the striatum, and cerebellum. It shares the same target in rat brain than AaTX1 (AC Q867F4) and BmTX3 (AC Q8I0L5). In DPP6 knockout mice, A-type currents are about 20-fold less affected by the toxin. In rodent models of Parkinson's disease, the toxin reduces motor symptoms and emotional and cognitive symptoms. This chain is Potassium channel toxin alpha-KTx 15.3, found in Androctonus mauritanicus mauritanicus (Scorpion).